Reading from the N-terminus, the 284-residue chain is Probable palmitoyltransferase ZDHHC24 (284 aa).

The Cytoplasmic segment spans residues 1-18; the sequence is MGEPWAARGTEGAPARMP. A helical membrane pass occupies residues 19 to 39; it reads VVFTALWAAVVVLELTYVMVL. At 40 to 52 the chain is on the extracellular side; sequence GPGPPPLEPLARA. A helical transmembrane segment spans residues 53-73; sequence LQLALAAYQLLNLLGNMGLFL. Over 74–137 the chain is Cytoplasmic; it reads RSDPSIRGVM…GRCVGFHNYR (64 aa). The 51-residue stretch at 94-144 folds into the DHHC domain; sequence AYCYQCQSQVPPRSGHCSACRVCILRRDHHCRLLGRCVGFHNYRPFLCLLL. Cysteine 124 functions as the S-palmitoyl cysteine intermediate in the catalytic mechanism. A helical transmembrane segment spans residues 138–158; sequence PFLCLLLHAAGVLLHISVLLS. The Extracellular portion of the chain corresponds to 159 to 166; that stretch reads PALSALLQ. Residues 167-187 form a helical membrane-spanning segment; sequence AHSALYTVALLLLPWLMLLTG. Over 188-195 the chain is Cytoplasmic; it reads KVSLAQFA. A helical membrane pass occupies residues 196-216; sequence LAFVVDTCVAGALLCGAGLLF. Residues 217–284 lie on the Extracellular side of the membrane; the sequence is HGMLLLRGQT…TPTDVGLVTS (68 aa).

The protein belongs to the DHHC palmitoyltransferase family.

Its subcellular location is the membrane. The catalysed reaction is L-cysteinyl-[protein] + hexadecanoyl-CoA = S-hexadecanoyl-L-cysteinyl-[protein] + CoA. Probable palmitoyltransferase that could catalyze the addition of palmitate onto various protein substrates. This Rattus norvegicus (Rat) protein is Probable palmitoyltransferase ZDHHC24 (Zdhhc24).